The primary structure comprises 259 residues: MLPSTSLNSSMYGNGALNSRDAARHTAGAKRYKYLRRLFRFRQMDFEFAAWQMLYLFTSPQRVYRNFHYRKQTKDQWARDDPAFLVLLSIWLCVSTIGFGFVLDMGFFETIKLLLWVVFIDCVGVGLLISTLMWFISNKYLVKRQSRDYDVEWGYAFDVHLNAFYPLLVILHFIQLFFINHVILTDTFIGYLVGNTLWLIAVGYYIYVTFLGYSALPFLKNTVVLLYPFAPLIVLYGLSLALGWNFTHTLCSFYKYRVK.

Residue M1 is modified to N-acetylmethionine. Over M1 to P82 the chain is Cytoplasmic. S6 carries the post-translational modification Phosphoserine. A helical transmembrane segment spans residues A83–L103. Residues D104–L115 lie on the Lumenal side of the membrane. The helical transmembrane segment at W116–I136 threads the bilayer. Over S137–A163 the chain is Cytoplasmic. A helical transmembrane segment spans residues F164 to L184. Topologically, residues T185–T187 are lumenal. Residues F188–V208 traverse the membrane as a helical segment. Topologically, residues T209–T222 are cytoplasmic. A helical transmembrane segment spans residues V223–G243. Over W244–K259 the chain is Lumenal.

The protein belongs to the unc-50 family. In terms of tissue distribution, expressed in brain, kidney and testis, and at lower levels in heart.

It is found in the nucleus inner membrane. Its subcellular location is the golgi apparatus membrane. In terms of biological role, involved in the cell surface expression of neuronal nicotinic receptors. Binds RNA. This chain is Protein unc-50 homolog (Unc50), found in Rattus norvegicus (Rat).